We begin with the raw amino-acid sequence, 572 residues long: DNA mismatch repair protein MutL (572 aa).

Belongs to the DNA mismatch repair MutL/HexB family.

Its function is as follows. This protein is involved in the repair of mismatches in DNA. It is required for dam-dependent methyl-directed DNA mismatch repair. May act as a 'molecular matchmaker', a protein that promotes the formation of a stable complex between two or more DNA-binding proteins in an ATP-dependent manner without itself being part of a final effector complex. The sequence is that of DNA mismatch repair protein MutL from Dictyoglomus turgidum (strain DSM 6724 / Z-1310).